We begin with the raw amino-acid sequence, 123 residues long: Small ribosomal subunit protein uS12 (123 aa).

Positions 1–30 are disordered; sequence MPTIQQLIRKPRQPKVQRSKSQHLQSCPQK. Residues 9 to 21 show a composition bias toward basic residues; sequence RKPRQPKVQRSKS. At Asp-89 the chain carries 3-methylthioaspartic acid.

Belongs to the universal ribosomal protein uS12 family. As to quaternary structure, part of the 30S ribosomal subunit. Contacts proteins S8 and S17. May interact with IF1 in the 30S initiation complex.

With S4 and S5 plays an important role in translational accuracy. Functionally, interacts with and stabilizes bases of the 16S rRNA that are involved in tRNA selection in the A site and with the mRNA backbone. Located at the interface of the 30S and 50S subunits, it traverses the body of the 30S subunit contacting proteins on the other side and probably holding the rRNA structure together. The combined cluster of proteins S8, S12 and S17 appears to hold together the shoulder and platform of the 30S subunit. This is Small ribosomal subunit protein uS12 from Paracoccus denitrificans (strain Pd 1222).